A 479-amino-acid polypeptide reads, in one-letter code: FAD-dependent monooxygenase atmM (479 aa).

A helical membrane pass occupies residues 10–30 (IIVGGSVAGLTLAHCLQRAGI). The FAD site is built by Glu-36, Gly-50, Arg-109, Asp-309, and Ala-322. Residues 445-465 (WILVLLVIVVSFGLHSPELVI) traverse the membrane as a helical segment.

The protein belongs to the paxM FAD-dependent monooxygenase family. FAD is required as a cofactor.

It localises to the membrane. It functions in the pathway secondary metabolite biosynthesis. In terms of biological role, FAD-dependent monooxygenase; part of the ATM1 gene cluster that mediates the biosynthesis of aflatrem, a tremorgenic mycotoxin with acute neurotoxic effects. Synthesis of geranylgeranyl diphosphate (GGPP) by AtmG (a GGPP synthase) precedes condensation of GGPP with indole 3-glycerol phosphate, followed by epoxidation and cyclization by AtmM (a FAD-dependent monooxygenase) and AtmC (a prenyltransferase) to produce paspaline. AtmB is also essential for paspaline production, but its exact role has not been identified yet. AtmP, a cytochrome P450 monooxygenase, subsequently converts paspaline to 13-desoxypaxilline via PC-M6 by removal of the C-30 methyl group and oxidation at C-10. AtmQ, a cytochrome P450 monooxygenase, then catalyzes the oxidation of 13-desoxypaxilline, first at C-7 to produce paspalicine and then at C-13 to form paspalinine. Finally, AtmD prenylates paspalinine to form aflatrem. This is FAD-dependent monooxygenase atmM from Aspergillus flavus.